Reading from the N-terminus, the 497-residue chain is Probable cytosol aminopeptidase (497 aa).

Mn(2+) contacts are provided by Lys263 and Asp268. Lys275 is a catalytic residue. Mn(2+)-binding residues include Asp286, Asp345, and Glu347. Arg349 is a catalytic residue.

This sequence belongs to the peptidase M17 family. The cofactor is Mn(2+).

The protein resides in the cytoplasm. The catalysed reaction is Release of an N-terminal amino acid, Xaa-|-Yaa-, in which Xaa is preferably Leu, but may be other amino acids including Pro although not Arg or Lys, and Yaa may be Pro. Amino acid amides and methyl esters are also readily hydrolyzed, but rates on arylamides are exceedingly low.. The enzyme catalyses Release of an N-terminal amino acid, preferentially leucine, but not glutamic or aspartic acids.. Presumably involved in the processing and regular turnover of intracellular proteins. Catalyzes the removal of unsubstituted N-terminal amino acids from various peptides. The polypeptide is Probable cytosol aminopeptidase (Sinorhizobium medicae (strain WSM419) (Ensifer medicae)).